We begin with the raw amino-acid sequence, 194 residues long: Probable calcium-binding protein CML45 (194 aa).

Positions 52–63 (NNKDQQETLTKQ) are enriched in basic and acidic residues. A disordered region spans residues 52–81 (NNKDQQETLTKQEDDDDDDDDDDDDDDDDI). Acidic residues predominate over residues 64–81 (EDDDDDDDDDDDDDDDDI). EF-hand domains follow at residues 76 to 98 (DDDDDIDISREEAEMVMRSLGLF), 122 to 157 (ASLEEVKQAFDVFDENKDGFIDAIELQRVLTILGFK), and 160 to 194 (SYLDNCLVMIRSLDGNKDGKIDFNEFVKFMETSFY). The Ca(2+) site is built by aspartate 135, asparagine 137, aspartate 139, glutamate 146, aspartate 173, asparagine 175, aspartate 177, lysine 179, and glutamate 184.

Functionally, potential calcium sensor. The chain is Probable calcium-binding protein CML45 from Arabidopsis thaliana (Mouse-ear cress).